Reading from the N-terminus, the 1205-residue chain is Partitioning defective 3 homolog B (1205 aa).

2 disordered regions span residues 83–104 (EPLH…PDAF) and 137–165 (VRRS…SLKL). At S100 the chain carries Phosphoserine. The region spanning 201–289 (TRTVEISGEG…SPSVLLHVLP (89 aa)) is the PDZ 1 domain. The tract at residues 318–374 (VPPPVHGKSGLKTANLTGTDSPETDASASLQQNKSPRVPRLGGKPSSPSLSPLMGFG) is disordered. The segment covering 329 to 352 (KTANLTGTDSPETDASASLQQNKS) has biased composition (polar residues). Phosphoserine occurs at positions 346, 352, and 368. The span at 356–374 (PRLGGKPSSPSLSPLMGFG) shows a compositional bias: low complexity. 2 PDZ domains span residues 383 to 468 (KIDL…VIAR) and 498 to 585 (EIPL…GMIQ). Residues S635, S710, S728, S730, S746, S749, and S801 each carry the phosphoserine modification. The disordered stretch occupies residues 707–743 (ASKSMDLVPDESKVHSLAGQKSESPSKDFGPTLGLKK). 2 disordered regions span residues 784 to 921 (AIDK…KHQE) and 1111 to 1205 (PYYP…TAAV). Residues 806 to 822 (HSGQGALNCESAPQGNS) show a composition bias toward polar residues. Basic and acidic residues-rich tracts occupy residues 838–865 (KEKE…DPER) and 881–921 (KKED…KHQE). Position 1184 is a phosphoserine (S1184).

Belongs to the PAR3 family. As to quaternary structure, interacts with PARD6B. Interacts with INSC/inscuteable. Highly expressed in kidney, lung and skeletal muscle. Expressed at intermediate levels in brain, heart, placenta, liver and pancreas. Isoform 1 is predominant, while isoform 2 and isoform 3 are expressed at lower levels.

The protein localises to the endomembrane system. It is found in the cell junction. Its subcellular location is the tight junction. Putative adapter protein involved in asymmetrical cell division and cell polarization processes. May play a role in the formation of epithelial tight junctions. This chain is Partitioning defective 3 homolog B (PARD3B), found in Homo sapiens (Human).